Reading from the N-terminus, the 380-residue chain is Putative ankyrin repeat protein RF_1306 (380 aa).

ANK repeat units lie at residues 48–76 (NKWSDLHIAVGAKELKLVKALCNEKNINA), 80–109 (KCRTPLELAILGNDLETVKFLVQMGGKIAP), 112–143 (YGWSAIHLAIKIDNVEMVEYLYENTEFQKYDK), 170–199 (NNKTPLELAVESKNISSVKALIIKGAKFDI), 203–233 (LGYKIFELAIDSEDMKLIEYLVNHTLVGKNT), 239–268 (LEKVAQIYDKNINLSKLVKVLIKDNAGFDK), 270–299 (LGQKLLQKAIYADDLELVETLYSKGVDAQY), 303–333 (LGRSGLHHAIKANCGEELIQFLIEHTTDINY), and 337–366 (SGLNPLGLAKSNNCTVATKLLLEAGAYESY).

This is Putative ankyrin repeat protein RF_1306 from Rickettsia felis (strain ATCC VR-1525 / URRWXCal2) (Rickettsia azadi).